Reading from the N-terminus, the 241-residue chain is MGTSPFVLPFAALEVGQHLYWQIGKLRIHGQVFMTSWILIGALLTLVVVGTKKMERDPKGVQNLLEFLWDYIRDLARTQIGEKVYRDWMPFIGTLFLFIFVSNWGGALIPWKLIELPSGELGAPTADINTTVALALLVSLSYFYAGLSNKGLRYFEYYVHPTPIMLPFKIVEDFTKPLSLSFRLFGNILADELVVAVLVFLVPLVLPVPVMFLGLFTSAIQALIFATLAAYYIGEAVEEHH.

5 consecutive transmembrane segments (helical) span residues 30–50, 91–111, 128–148, 193–213, and 214–234; these read GQVF…VVVG, FIGT…LIPW, INTT…AGLS, LVVA…VMFL, and GLFT…YYIG.

This sequence belongs to the ATPase A chain family. F-type ATPases have 2 components, CF(1) - the catalytic core - and CF(0) - the membrane proton channel. CF(1) has five subunits: alpha(3), beta(3), gamma(1), delta(1), epsilon(1). CF(0) has four main subunits: a, b, b' and c.

Its subcellular location is the cellular thylakoid membrane. Its function is as follows. Key component of the proton channel; it plays a direct role in the translocation of protons across the membrane. In Prochlorococcus marinus (strain SARG / CCMP1375 / SS120), this protein is ATP synthase subunit a.